A 191-amino-acid polypeptide reads, in one-letter code: Glutathione-dependent formaldehyde-activating enzyme (191 aa).

One can recognise a CENP-V/GFA domain in the interval 22–169; that stretch reads FQGGTLECHC…LTELGLPPYD (148 aa). Zn(2+) is bound by residues Cys29, Cys31, Cys50, Cys52, Cys55, Cys97, and Cys100.

Belongs to the Gfa family. Zn(2+) is required as a cofactor.

The catalysed reaction is S-(hydroxymethyl)glutathione = glutathione + formaldehyde. The protein operates within one-carbon metabolism; formaldehyde degradation; formate from formaldehyde (glutathione route): step 1/3. Functionally, catalyzes the condensation of formaldehyde and glutathione to S-hydroxymethylglutathione. In Xanthomonas axonopodis pv. citri (strain 306), this protein is Glutathione-dependent formaldehyde-activating enzyme.